A 318-amino-acid chain; its full sequence is L-carnitine dehydrogenase (318 aa).

14-19 (GAGVIG) contributes to the NAD(+) binding site.

The protein belongs to the 3-hydroxyacyl-CoA dehydrogenase family. L-carnitine dehydrogenase subfamily. Homodimer.

It is found in the cytoplasm. The catalysed reaction is carnitine + NAD(+) = 3-dehydrocarnitine + NADH + H(+). It functions in the pathway amine and polyamine metabolism; carnitine metabolism. Catalyzes the NAD(+)-dependent oxidation of L-carnitine to 3-dehydrocarnitine. The chain is L-carnitine dehydrogenase from Streptomyces coelicolor (strain ATCC BAA-471 / A3(2) / M145).